Consider the following 245-residue polypeptide: E3 ubiquitin-protein ligase RNF138 (245 aa).

Position 2 is an N-acetylalanine (alanine 2). Residues 18 to 58 form an RING-type zinc finger; it reads CPVCQEVLKTPVRTTACQHVFCRKCFLTAMRESGAHCPLCR. Zn(2+) contacts are provided by cysteine 86, cysteine 89, histidine 101, and cysteine 105. Residues 86 to 105 form a C2HC RNF-type zinc finger; it reads CRCCAKQIKFYRMRHHYKSC. The interval 125 to 154 is disordered; sequence QDSVGNSNRSETSTSDNTETYQENTSSSGH. Threonine 142 is subject to Phosphothreonine. C2H2-type zinc fingers lie at residues 157-180 and 187-215; these read FKCPLCQESNFTRQRLLDHCNSNH and VTCPICVSLPWGDPSQITRNFVSHLNQRH. Positions 225 to 243 constitute a UIM domain; it reads LQLDEETQYQTAVEESFQV.

In terms of assembly, interacts with NLK. Interacts with XRCC5/Ku80. Interacts with RBBP8/CtIP. Auto-ubiquitinated.

It localises to the chromosome. The enzyme catalyses S-ubiquitinyl-[E2 ubiquitin-conjugating enzyme]-L-cysteine + [acceptor protein]-L-lysine = [E2 ubiquitin-conjugating enzyme]-L-cysteine + N(6)-ubiquitinyl-[acceptor protein]-L-lysine.. It functions in the pathway protein modification; protein ubiquitination. In terms of biological role, E3 ubiquitin-protein ligase involved in DNA damage response by promoting DNA resection and homologous recombination. Recruited to sites of double-strand breaks following DNA damage and specifically promotes double-strand break repair via homologous recombination. Two different, non-exclusive, mechanisms have been proposed. According to a report, regulates the choice of double-strand break repair by favoring homologous recombination over non-homologous end joining (NHEJ): acts by mediating ubiquitination of XRCC5/Ku80, leading to remove the Ku complex from DNA breaks, thereby promoting homologous recombination. According to another report, cooperates with UBE2Ds E2 ubiquitin ligases (UBE2D1, UBE2D2, UBE2D3 or UBE2D4) to promote homologous recombination by mediating ubiquitination of RBBP8/CtIP. Together with NLK, involved in the ubiquitination and degradation of TCF/LEF. Also exhibits auto-ubiquitination activity in combination with UBE2K. May act as a negative regulator in the Wnt/beta-catenin-mediated signaling pathway. The protein is E3 ubiquitin-protein ligase RNF138 of Homo sapiens (Human).